A 763-amino-acid polypeptide reads, in one-letter code: Dual specificity tyrosine-phosphorylation-regulated kinase 1A (763 aa).

Ser14 is subject to Phosphoserine. A disordered region spans residues 33–56; that stretch reads QMPHSHQYSDRRQPNISDQQVSAL. The span at 46–56 shows a compositional bias: polar residues; sequence PNISDQQVSAL. Residue Tyr111 is modified to Phosphotyrosine; by autocatalysis. The tract at residues 115–136 is disordered; the sequence is KKRRHQQGQGDDSSHKKERKVY. The short motif at 117–134 is the Bipartite nuclear localization signal element; sequence RRHQQGQGDDSSHKKERK. The residue at position 140 (Tyr140) is a Phosphotyrosine; by autocatalysis. Tyr145 is modified (phosphotyrosine). Position 159 is a phosphotyrosine; by autocatalysis (Tyr159). The Protein kinase domain maps to 159–479; that stretch reads YEIDSLIGKG…PYYALQHSFF (321 aa). 165–173 provides a ligand contact to ATP; the sequence is IGKGSFGQV. The residue at position 177 (Tyr177) is a Phosphotyrosine; by autocatalysis. Lys188 is an ATP binding site. A Phosphotyrosine; by autocatalysis modification is found at Tyr219. 238 to 241 serves as a coordination point for ATP; sequence FEML. The active-site Proton acceptor is Asp287. Ser310 carries the post-translational modification Phosphoserine; by autocatalysis. Tyr319 and Tyr321 each carry phosphotyrosine; by autocatalysis. The residue at position 402 (Thr402) is a Phosphothreonine; by autocatalysis. Residues 408-442 are disordered; that stretch reads TKDGKREYKPPGTRKLHNILGVETGGPGGRRAGES. Position 449 is a phosphotyrosine; by autocatalysis (Tyr449). Polar residues predominate over residues 485-501; sequence EGTNTSNSVSTSPAMEQ. 3 disordered regions span residues 485–540, 596–679, and 744–763; these read EGTN…HSGG, NALH…GNQA, and DREE…VASS. Residues 502–525 show a composition bias toward low complexity; sequence SQSSGTTSSTSSSSGGSSGTSNSG. Residues Ser529 and Ser538 each carry the phosphoserine modification. The interval 595–625 is histidine-rich domain (HRD); it reads QNALHHHHGNSSHHHHHHHHHHHHHGQQALG. Basic residues predominate over residues 598-620; the sequence is LHHHHGNSSHHHHHHHHHHHHHG. Over residues 634–645 the composition is skewed to polar residues; sequence NSPTNSSSTQDS. The span at 654–672 shows a compositional bias: low complexity; the sequence is SMTSLSSSTTSSSTSSSST. Residues Ser748 and Ser758 each carry the phosphoserine modification. Residues 754–763 are compositionally biased toward polar residues; it reads CVQQSPVASS.

It belongs to the protein kinase superfamily. CMGC Ser/Thr protein kinase family. MNB/DYRK subfamily. As to quaternary structure, interacts with RAD54L2/ARIP4. Interacts with CRY2. Interacts with RANBP9. Interacts with WDR68. Interacts with SIRT1. Post-translationally, can also autophosphorylate on serine and threonine residues (in vitro). Autophosphorylated on numerous tyrosine residues. In terms of tissue distribution, detected in brain (at protein level). Ubiquitous.

The protein localises to the nucleus speckle. It catalyses the reaction L-seryl-[protein] + ATP = O-phospho-L-seryl-[protein] + ADP + H(+). The enzyme catalyses L-threonyl-[protein] + ATP = O-phospho-L-threonyl-[protein] + ADP + H(+). It carries out the reaction L-tyrosyl-[protein] + ATP = O-phospho-L-tyrosyl-[protein] + ADP + H(+). The catalysed reaction is [DNA-directed RNA polymerase] + ATP = phospho-[DNA-directed RNA polymerase] + ADP + H(+). Its activity is regulated as follows. Inhibited by RANBP9. Inhibited by harmine, leucettamine B and leucettine L41. Its function is as follows. Dual-specificity kinase which possesses both serine/threonine and tyrosine kinase activities. Exhibits a substrate preference for proline at position P+1 and arginine at position P-3. Plays an important role in double-strand breaks (DSBs) repair following DNA damage. Mechanistically, phosphorylates RNF169 and increases its ability to block accumulation of TP53BP1 at the DSB sites thereby promoting homologous recombination repair (HRR). Also acts as a positive regulator of transcription by acting as a CTD kinase that mediates phosphorylation of the CTD (C-terminal domain) of the large subunit of RNA polymerase II (RNAP II) POLR2A. May play a role in a signaling pathway regulating nuclear functions of cell proliferation. Modulates alternative splicing by phosphorylating the splice factor SRSF6. Has pro-survival function and negatively regulates the apoptotic process. Promotes cell survival upon genotoxic stress through phosphorylation of SIRT1. This in turn inhibits p53/TP53 activity and apoptosis. Phosphorylates SEPTIN4, SEPTIN5 and SF3B1 at 'Thr-434'. In Rattus norvegicus (Rat), this protein is Dual specificity tyrosine-phosphorylation-regulated kinase 1A (Dyrk1a).